A 252-amino-acid chain; its full sequence is Ditrans,polycis-undecaprenyl-diphosphate synthase ((2E,6E)-farnesyl-diphosphate specific) (252 aa).

Residue D25 is part of the active site. Position 25 (D25) interacts with Mg(2+). Substrate-binding positions include 26–29 (GNGR), W30, R38, H42, and 70–72 (SSE). Catalysis depends on N73, which acts as the Proton acceptor. Positions 74, 76, and 193 each coordinate substrate. H198 is a binding site for Mg(2+). 199–201 (RIS) is a substrate binding site. E212 serves as a coordination point for Mg(2+).

Belongs to the UPP synthase family. In terms of assembly, homodimer. Requires Mg(2+) as cofactor.

It carries out the reaction 8 isopentenyl diphosphate + (2E,6E)-farnesyl diphosphate = di-trans,octa-cis-undecaprenyl diphosphate + 8 diphosphate. Catalyzes the sequential condensation of isopentenyl diphosphate (IPP) with (2E,6E)-farnesyl diphosphate (E,E-FPP) to yield (2Z,6Z,10Z,14Z,18Z,22Z,26Z,30Z,34E,38E)-undecaprenyl diphosphate (di-trans,octa-cis-UPP). UPP is the precursor of glycosyl carrier lipid in the biosynthesis of bacterial cell wall polysaccharide components such as peptidoglycan and lipopolysaccharide. This is Ditrans,polycis-undecaprenyl-diphosphate synthase ((2E,6E)-farnesyl-diphosphate specific) from Salmonella typhi.